We begin with the raw amino-acid sequence, 225 residues long: Ribulose-phosphate 3-epimerase (225 aa).

Serine 10 is a binding site for substrate. The a divalent metal cation site is built by histidine 35, aspartate 37, and histidine 68. Aspartate 37 acts as the Proton acceptor in catalysis. Residues histidine 68, 144-147 (GFGG), and 175-177 (DGG) each bind substrate. Residue aspartate 175 participates in a divalent metal cation binding. The active-site Proton donor is the aspartate 175.

This sequence belongs to the ribulose-phosphate 3-epimerase family. It depends on a divalent metal cation as a cofactor.

The enzyme catalyses D-ribulose 5-phosphate = D-xylulose 5-phosphate. Its pathway is carbohydrate degradation. Its function is as follows. Catalyzes the reversible epimerization of D-ribulose 5-phosphate to D-xylulose 5-phosphate. This Rhodospirillum rubrum protein is Ribulose-phosphate 3-epimerase.